Here is a 403-residue protein sequence, read N- to C-terminus: MEPVGCCGECRGSSVDPRSTFVLSNLAEVVERVLTFLPAKALLRVACVCRLWRECVRRVLRTHRSVTWISAGLAEAGHLEGHCLVRVVAEELENVRILPHTVLYMADSETFISLEECRGHKRARKRTSMETALALEKLFPKQCQVLGIVTPGIVVTPMGSGSNRPQEIEIGESGFALLFPQIEGIKIQPFHFIKDPKNLTLERHQLTEVGLLDNPELRVVLVFGYNCCKVGASNYLQQVVSTFSDMNIILAGGQVDNLSSLTSEKNPLDIDASGVVGLSFSGHRIQSATVLLNEDVSDEKTAEAAMQRLKAANIPEHNTIGFMFACVGRGFQYYRAKGNVEADAFRKFFPSVPLFGFFGNGEIGCDRIVTGNFILRKCNEVKDDDLFHSYTTIMALIHLGSSK.

An N-acetylmethionine modification is found at Met-1. Residues 21-67 (FVLSNLAEVVERVLTFLPAKALLRVACVCRLWRECVRRVLRTHRSVT) enclose the F-box domain. Thr-127 carries the post-translational modification Phosphothreonine. The residue at position 128 (Ser-128) is a Phosphoserine. Position 194 is an N6-acetyllysine (Lys-194).

Directly interacts with SKP1 and CUL1. Interacts (via C-terminal) with KDM4A. Interacts with TP53. Interacts with MTOR; this interaction promotes 'lys-27'-linked ubiquitination of MTOR. In terms of assembly, (Microbial infection) Interacts with SARS_COV-2 protein NSP5; this interaction attenuates NSP5-mediated inhibition of innate immunity. Phosphorylated by EIF2AK4 at Thr-127 causes cytoplasmic retention of FBXO22. Predominantly expressed in liver, also enriched in cardiac muscle.

It is found in the cytoplasm. The protein resides in the nucleus. The protein localises to the myofibril. It localises to the sarcomere. Its subcellular location is the z line. In terms of biological role, substrate-recognition component of the SCF (SKP1-CUL1-F-box protein)-type E3 ubiquitin ligase complex that is implicated in the control of various cellular processes such as cell cycle control, transcriptional regulation, DNA damage repair, and apoptosis. Promotes the proteasome-dependent degradation of key sarcomeric proteins, such as alpha-actinin (ACTN2) and filamin-C (FLNC), essential for maintenance of normal contractile function. Acts as a key regulator of histone methylation marks namely H3K9 and H3K36 methylation through the regulation of histone demethylase KDM4A protein levels. In complex with KDM4A, also regulates the abundance of TP53 by targeting methylated TP53 for degradation at the late senescent stage. Under oxidative stress, promotes the ubiquitination and degradation of BACH1. Mechanistically, reactive oxygen species (ROS) covalently modify cysteine residues on the bZIP domain of BACH1, leading to its release from chromatin and making it accessible to FBXO22. Upon amino acid depletion, mediates 'Lys-27'-linked ubiquitination of MTOR and thereby inhibits substrate recruitment to mTORC1. Also inhibits SARS-CoV-2 replication by inducing NSP5 degradation. In Homo sapiens (Human), this protein is F-box only protein 22 (FBXO22).